A 137-amino-acid polypeptide reads, in one-letter code: Ribosome-binding factor A (137 aa).

Belongs to the RbfA family. Monomer. Binds 30S ribosomal subunits, but not 50S ribosomal subunits or 70S ribosomes.

It localises to the cytoplasm. Its function is as follows. One of several proteins that assist in the late maturation steps of the functional core of the 30S ribosomal subunit. Associates with free 30S ribosomal subunits (but not with 30S subunits that are part of 70S ribosomes or polysomes). Required for efficient processing of 16S rRNA. May interact with the 5'-terminal helix region of 16S rRNA. This chain is Ribosome-binding factor A, found in Shewanella amazonensis (strain ATCC BAA-1098 / SB2B).